We begin with the raw amino-acid sequence, 202 residues long: Ras-related protein Rab-2B (202 aa).

Gly-31–Ser-38 contributes to the GTP binding site. An Effector region motif is present at residues Ser-53–Phe-61. GTP-binding positions include Asp-79–Gln-83 and Asn-137–Asp-140.

It belongs to the small GTPase superfamily. Rab family. Post-translationally, this sequence lacks the C-terminal cysteine motifs subject to isoprenylation in other Rab proteins.

This is Ras-related protein Rab-2B (rab2B) from Dictyostelium discoideum (Social amoeba).